A 304-amino-acid chain; its full sequence is Putative S-adenosyl-L-methionine-dependent methyltransferase MAV_4236 (304 aa).

Residues Asp-129 and 158–159 (DL) each bind S-adenosyl-L-methionine.

Belongs to the UPF0677 family.

In terms of biological role, exhibits S-adenosyl-L-methionine-dependent methyltransferase activity. The sequence is that of Putative S-adenosyl-L-methionine-dependent methyltransferase MAV_4236 from Mycobacterium avium (strain 104).